Reading from the N-terminus, the 509-residue chain is Taxoid 14-beta-hydroxylase (509 aa).

The next 3 membrane-spanning stretches (helical) occupy residues 20–40 (AILF…LLFL), 186–206 (SVVA…FFNI), and 218–238 (LLEI…GFAY). Cysteine 443 contributes to the heme binding site.

The protein belongs to the cytochrome P450 family.

The protein localises to the microsome membrane. It carries out the reaction 10beta-hydroxytaxa-4(20),11-dien-5alpha-yl acetate + NADPH + O2 + H(+) = 10beta,14beta-dihydroxytaxa-4(20),11-dien-5alpha-yl acetate + NADP(+) + H2O. The protein operates within alkaloid biosynthesis; taxol biosynthesis. In terms of biological role, catalyzes the conversion of 5-alpha-acetoxy-10beta-ol to 5-alpha-acetoxy-10beta,14beta-dihydroxy taxadiene. Also acts on taxa-4(20),11-dien-5-alpha-yl acetate. This is Taxoid 14-beta-hydroxylase from Taxus cuspidata (Japanese yew).